The chain runs to 101 residues: Putative monooxygenase Rv0793 (101 aa).

Positions 5-93 constitute an ABM domain; it reads VAVIARFMPR…LTRPVAVTVL (89 aa).

In terms of assembly, homodimer.

In terms of biological role, putative monooygenase that might be involved in antibiotic biosynthesis, or may act as reactive oxygen species scavenger that could help in evading host defenses. The protein is Putative monooxygenase Rv0793 of Mycobacterium tuberculosis (strain ATCC 25618 / H37Rv).